The chain runs to 427 residues: Glucose-6-phosphate isomerase (427 aa).

Glu-281 serves as the catalytic Proton donor. Residues His-302 and Lys-417 contribute to the active site.

Belongs to the GPI family.

It localises to the cytoplasm. It catalyses the reaction alpha-D-glucose 6-phosphate = beta-D-fructose 6-phosphate. The protein operates within carbohydrate biosynthesis; gluconeogenesis. It functions in the pathway carbohydrate degradation; glycolysis; D-glyceraldehyde 3-phosphate and glycerone phosphate from D-glucose: step 2/4. Catalyzes the reversible isomerization of glucose-6-phosphate to fructose-6-phosphate. The protein is Glucose-6-phosphate isomerase of Mycoplasmopsis pulmonis (strain UAB CTIP) (Mycoplasma pulmonis).